The following is a 66-amino-acid chain: Small ribosomal subunit protein bS21 (66 aa).

This sequence belongs to the bacterial ribosomal protein bS21 family.

This Rickettsia africae (strain ESF-5) protein is Small ribosomal subunit protein bS21.